A 74-amino-acid chain; its full sequence is RNA-binding protein Hfq (74 aa).

A Sm domain is found at 9 to 69 (DQFLNQLRKE…ISTFMPQKNV (61 aa)).

It belongs to the Hfq family. As to quaternary structure, homohexamer.

Its function is as follows. RNA chaperone that binds small regulatory RNA (sRNAs) and mRNAs to facilitate mRNA translational regulation in response to envelope stress, environmental stress and changes in metabolite concentrations. Also binds with high specificity to tRNAs. This Bacillus cytotoxicus (strain DSM 22905 / CIP 110041 / 391-98 / NVH 391-98) protein is RNA-binding protein Hfq.